Reading from the N-terminus, the 279-residue chain is Dehydrogenase/reductase SDR family member 4 (279 aa).

Position 37–61 (Leu-37–Val-61) interacts with NADP(+). An N6-acetyllysine; alternate modification is found at Lys-93. N6-succinyllysine; alternate is present on Lys-93. Substrate is bound at residue Ser-170. Residue Tyr-183 is the Proton acceptor of the active site. Residue Lys-187 participates in NADP(+) binding. Residue Lys-217 is modified to N6-acetyllysine; alternate. Position 217 is an N6-succinyllysine; alternate (Lys-217). Residue Ser-221 is modified to Phosphoserine. Residues Lys-228 and Lys-235 each carry the N6-succinyllysine modification. The Peroxisomal targeting signal motif lies at Ser-277 to Leu-279.

This sequence belongs to the short-chain dehydrogenases/reductases (SDR) family. In terms of assembly, homotetramer. In terms of tissue distribution, detected in heart, kidney, liver and small intestine. Detected at lower levels in brain, lung, stomach and spleen.

Its subcellular location is the peroxisome. The enzyme catalyses a secondary alcohol + NADP(+) = a ketone + NADPH + H(+). It carries out the reaction 3alpha-hydroxy-5beta-pregnan-20-one + NADP(+) = 5beta-pregnan-3,20-dione + NADPH + H(+). The catalysed reaction is 5beta-dihydrotestosterone + NADPH + H(+) = 5beta-androstane-3alpha,17beta-diol + NADP(+). It catalyses the reaction all-trans-retinol + NADP(+) = all-trans-retinal + NADPH + H(+). The enzyme catalyses isatin + NADPH + H(+) = 3-hydroxyindolin-2-one + NADP(+). Inhibited by kaempferol, quercetin, genistein and myristic acid. In terms of biological role, NADPH-dependent oxidoreductase which catalyzes the reduction of a variety of compounds bearing carbonyl groups including ketosteroids, alpha-dicarbonyl compounds, aldehydes, aromatic ketones and quinones. Reduces all-trans-retinal and 9-cis retinal. Reduces 3-ketosteroids and benzil into 3alpha-hydroxysteroids and S-benzoin, respectively, in contrast to the stereoselectivity of primates DHRS4s which produce 3beta-hydroxysteroids and R-benzoin. In the reverse reaction, catalyzes the NADP-dependent oxidation of 3alpha-hydroxysteroids and alcohol, but with much lower efficiency. Involved in the metabolism of 3alpha-hydroxysteroids, retinoid, isatin and xenobiotic carbonyl compounds. The chain is Dehydrogenase/reductase SDR family member 4 (DHRS4) from Sus scrofa (Pig).